The chain runs to 517 residues: 2-isopropylmalate synthase (517 aa).

The region spanning 4-266 (INFFDTTLRD…ESTIQLNEIK (263 aa)) is the Pyruvate carboxyltransferase domain. Positions 13, 201, 203, and 237 each coordinate Mn(2+). The segment at 391–517 (EFESLQVHYG…IEIEKHHAIS (127 aa)) is regulatory domain.

The protein belongs to the alpha-IPM synthase/homocitrate synthase family. LeuA type 1 subfamily. Homodimer. The cofactor is Mn(2+).

Its subcellular location is the cytoplasm. It catalyses the reaction 3-methyl-2-oxobutanoate + acetyl-CoA + H2O = (2S)-2-isopropylmalate + CoA + H(+). It functions in the pathway amino-acid biosynthesis; L-leucine biosynthesis; L-leucine from 3-methyl-2-oxobutanoate: step 1/4. Its function is as follows. Catalyzes the condensation of the acetyl group of acetyl-CoA with 3-methyl-2-oxobutanoate (2-ketoisovalerate) to form 3-carboxy-3-hydroxy-4-methylpentanoate (2-isopropylmalate). The sequence is that of 2-isopropylmalate synthase from Bacillus pumilus (strain SAFR-032).